The sequence spans 115 residues: Anamorsin homolog 1 (115 aa).

Residues 30–115 (VKEATKGEDC…KVKLNLTDDI (86 aa)) are disordered. 4 residues coordinate [2Fe-2S] cluster: C39, C46, C49, and C51. Residues 39 to 51 (CTTRRRACKNCTC) are fe-S binding site A. [4Fe-4S] cluster is bound by residues C77, C80, C88, and C91. 2 consecutive short sequence motifs (cx2C motif) follow at residues 77–80 (CGNC) and 88–91 (CATC). The interval 77-91 (CGNCAKGDAFRCATC) is fe-S binding site B.

The protein belongs to the anamorsin family. Monomer. Requires [2Fe-2S] cluster as cofactor. [4Fe-4S] cluster is required as a cofactor.

It is found in the cytoplasm. It localises to the mitochondrion intermembrane space. Its function is as follows. Component of the cytosolic iron-sulfur (Fe-S) protein assembly (CIA) machinery. Required for the maturation of extramitochondrial Fe-S proteins. Part of an electron transfer chain functioning in an early step of cytosolic Fe-S biogenesis, facilitating the de novo assembly of a [4Fe-4S] cluster on the cytosolic Fe-S scaffold complex. Electrons are transferred from NADPH via a FAD- and FMN-containing diflavin oxidoreductase. Together with the diflavin oxidoreductase, also required for the assembly of the diferric tyrosyl radical cofactor of ribonucleotide reductase (RNR), probably by providing electrons for reduction during radical cofactor maturation in the catalytic small subunit. This Trypanosoma cruzi (strain CL Brener) protein is Anamorsin homolog 1.